The following is a 502-amino-acid chain: RxLR effector protein BLN06 (502 aa).

The N-terminal stretch at 1–20 (MTLLHCWLLLVGHLASTAYA) is a signal peptide. The N-linked (GlcNAc...) asparagine glycan is linked to N38. Positions 50 to 53 (LEER) match the dEER motif.

The protein belongs to the RxLR effector family.

Its subcellular location is the secreted. The protein localises to the host cell membrane. In terms of biological role, secreted effector that triggers a robust hypersensitive response (HR) in Lactuca serriola LS102. The response to BLN06 was visible as chlorosis but not as strong necrosis. The polypeptide is RxLR effector protein BLN06 (Bremia lactucae (Lettuce downy mildew)).